Here is a 423-residue protein sequence, read N- to C-terminus: UDP-N-acetylglucosamine 1-carboxyvinyltransferase (423 aa).

Residue 21-22 coordinates phosphoenolpyruvate; sequence KN. A UDP-N-acetyl-alpha-D-glucosamine-binding site is contributed by arginine 92. Cysteine 116 serves as the catalytic Proton donor. At cysteine 116 the chain carries 2-(S-cysteinyl)pyruvic acid O-phosphothioketal. Residues aspartate 305 and valine 327 each coordinate UDP-N-acetyl-alpha-D-glucosamine.

This sequence belongs to the EPSP synthase family. MurA subfamily.

Its subcellular location is the cytoplasm. The catalysed reaction is phosphoenolpyruvate + UDP-N-acetyl-alpha-D-glucosamine = UDP-N-acetyl-3-O-(1-carboxyvinyl)-alpha-D-glucosamine + phosphate. Its pathway is cell wall biogenesis; peptidoglycan biosynthesis. In terms of biological role, cell wall formation. Adds enolpyruvyl to UDP-N-acetylglucosamine. The chain is UDP-N-acetylglucosamine 1-carboxyvinyltransferase from Fervidobacterium nodosum (strain ATCC 35602 / DSM 5306 / Rt17-B1).